The following is a 284-amino-acid chain: L-ribulose-5-phosphate 3-epimerase UlaE (284 aa).

Belongs to the L-ribulose-5-phosphate 3-epimerase family.

It carries out the reaction L-ribulose 5-phosphate = L-xylulose 5-phosphate. The protein operates within cofactor degradation; L-ascorbate degradation; D-xylulose 5-phosphate from L-ascorbate: step 3/4. Functionally, catalyzes the isomerization of L-xylulose-5-phosphate to L-ribulose-5-phosphate. Is involved in the anaerobic L-ascorbate utilization. In Escherichia coli (strain 55989 / EAEC), this protein is L-ribulose-5-phosphate 3-epimerase UlaE.